The following is a 93-amino-acid chain: Large ribosomal subunit protein uL23cz/uL23cy (93 aa).

Belongs to the universal ribosomal protein uL23 family. Part of the 50S ribosomal subunit.

The protein resides in the plastid. The protein localises to the chloroplast. Binds to 23S rRNA. The polypeptide is Large ribosomal subunit protein uL23cz/uL23cy (rpl23-A) (Oryza nivara (Indian wild rice)).